The following is a 125-amino-acid chain: Large ribosomal subunit protein eL31 (125 aa).

Met-1 is modified (N-acetylmethionine). Ser-15 carries the phosphoserine modification. An N6-succinyllysine mark is found at Lys-55 and Lys-70. Lys-75 carries the post-translational modification N6-acetyllysine; alternate. Lys-75 bears the N6-succinyllysine; alternate mark. Ser-98 bears the Phosphoserine mark.

This sequence belongs to the eukaryotic ribosomal protein eL31 family. Component of the large ribosomal subunit.

It is found in the cytoplasm. In terms of biological role, component of the large ribosomal subunit. The ribosome is a large ribonucleoprotein complex responsible for the synthesis of proteins in the cell. The protein is Large ribosomal subunit protein eL31 (RPL31) of Pongo abelii (Sumatran orangutan).